A 177-amino-acid polypeptide reads, in one-letter code: Glutathione peroxidase homolog (177 aa).

The active site involves Cys-35.

The protein belongs to the glutathione peroxidase family.

Important in the cellular metabolism or defense processes particular to this pathogen. This is Glutathione peroxidase homolog (gpxA) from Neisseria meningitidis serogroup A / serotype 4A (strain DSM 15465 / Z2491).